The primary structure comprises 661 residues: 3-hydroxypropionyl-coenzyme A synthetase (661 aa).

The active site involves Asp526. Residue Lys617 is modified to N6-acetyllysine.

The protein belongs to the ATP-dependent AMP-binding enzyme family. As to quaternary structure, homotetramer.

The catalysed reaction is 3-hydroxypropanoate + ATP + CoA = 3-hydroxypropanoyl-CoA + AMP + diphosphate. Functionally, plays a role in the autotrophic CO(2) fixation pathway. Activates 3-hydroxypropionate to its CoA ester. Can also activate propionate, and to a lesser extent acrylate, acetate and butyrate. This is 3-hydroxypropionyl-coenzyme A synthetase from Metallosphaera sedula (strain ATCC 51363 / DSM 5348 / JCM 9185 / NBRC 15509 / TH2).